A 512-amino-acid chain; its full sequence is MIYIHKKIKNPIKDGIEIGEEIKRNVGRASLIIFITSILERDKLKQVFDGMKQHIPLDNLIGCSTGGTFSGKDYIKEDGVLILAFDEYYKSAISCEKVDREAEYVGKKIADKIKTCIRDKYPKLDIDDNFLGFVFFDWNVDSEQEILDVLGRELTIPIIGGTAADDGSFDKFFQIYKGEVVKDCCVFGVVGGKLKFDLIYGHGYEPTDIYARVTKAEGKVVYELDGKPAYQRYLEMLSEYTKLPMDIIKKYFYRDLRRLDFYLVHPLGFMDINGNYITAFLERVEENTLVFRRDILEGSFLVLMKTDIEKQVKSIVDELKKAEDFENPLIFINECYGREVLKNSMFREFEEDILKYFLNFYKAGKKVEEYVIEDNCIGWLSYGETIAKDLIRFHNNLSFTGVIFELSQSSNINWREELKNFNFEDDEIEVIVNLINKQLTAKELLQLTNLSQTKLYHILNKLEKEGIIKSVSGKPKLYYIDNIKEILQKTHEKIEHENMVKKIKRKKLLRLL.

This is an uncharacterized protein from Methanocaldococcus jannaschii (strain ATCC 43067 / DSM 2661 / JAL-1 / JCM 10045 / NBRC 100440) (Methanococcus jannaschii).